A 147-amino-acid polypeptide reads, in one-letter code: Transthyretin (147 aa).

Positions 1 to 20 are cleaved as a signal peptide; it reads MASFRLLLLCLAGLVFVSEA. Cysteine 30 bears the Sulfocysteine mark. An L-thyroxine-binding site is contributed by lysine 35. Glutamate 62 bears the 4-carboxyglutamate mark. At serine 72 the chain carries Phosphoserine. Position 74 (glutamate 74) interacts with L-thyroxine. Asparagine 118 carries an N-linked (GlcNAc...) asparagine glycan. Serine 137 lines the L-thyroxine pocket.

This sequence belongs to the transthyretin family. In terms of assembly, homotetramer. Dimer of dimers. In the homotetramer, subunits assemble around a central channel that can accommodate two ligand molecules. Interacts with RBP4. Post-translationally, sulfonation of the reactive cysteine Cys-30 enhances the stability of the native conformation of TTR, avoiding misassembly of the protein leading to amyloid formation. As to expression, highly expressed in the choroid plexus.

The protein localises to the secreted. Thyroid hormone-binding protein. Probably transports thyroxine from the bloodstream to the brain. The sequence is that of Transthyretin (TTR) from Ovis aries (Sheep).